The following is a 78-amino-acid chain: Translation initiation factor IF-1, chloroplastic (78 aa).

Residues 1-72 (MKKQNLIDME…TKGRITYRLR (72 aa)) form the S1-like domain.

This sequence belongs to the IF-1 family. Component of the 30S ribosomal translation pre-initiation complex which assembles on the 30S ribosome in the order IF-2 and IF-3, IF-1 and N-formylmethionyl-tRNA(fMet); mRNA recruitment can occur at any time during PIC assembly.

Its subcellular location is the plastid. It is found in the chloroplast. In terms of biological role, one of the essential components for the initiation of protein synthesis. Stabilizes the binding of IF-2 and IF-3 on the 30S subunit to which N-formylmethionyl-tRNA(fMet) subsequently binds. Helps modulate mRNA selection, yielding the 30S pre-initiation complex (PIC). Upon addition of the 50S ribosomal subunit IF-1, IF-2 and IF-3 are released leaving the mature 70S translation initiation complex. The sequence is that of Translation initiation factor IF-1, chloroplastic from Physcomitrium patens (Spreading-leaved earth moss).